The primary structure comprises 219 residues: 7-cyano-7-deazaguanine synthase (219 aa).

10-20 (FSGGQDSTTCL) lines the ATP pocket. Zn(2+) contacts are provided by Cys188, Cys197, Cys200, and Cys203.

Belongs to the QueC family. In terms of assembly, homodimer. Zn(2+) is required as a cofactor.

It catalyses the reaction 7-carboxy-7-deazaguanine + NH4(+) + ATP = 7-cyano-7-deazaguanine + ADP + phosphate + H2O + H(+). Its pathway is purine metabolism; 7-cyano-7-deazaguanine biosynthesis. Its function is as follows. Catalyzes the ATP-dependent conversion of 7-carboxy-7-deazaguanine (CDG) to 7-cyano-7-deazaguanine (preQ(0)). This is 7-cyano-7-deazaguanine synthase from Clostridium botulinum (strain Loch Maree / Type A3).